Here is a 385-residue protein sequence, read N- to C-terminus: Lipid-A-disaccharide synthase 2 (385 aa).

The protein belongs to the LpxB family.

The catalysed reaction is a lipid X + a UDP-2-N,3-O-bis[(3R)-3-hydroxyacyl]-alpha-D-glucosamine = a lipid A disaccharide + UDP + H(+). It functions in the pathway bacterial outer membrane biogenesis; LPS lipid A biosynthesis. Its function is as follows. Condensation of UDP-2,3-diacylglucosamine and 2,3-diacylglucosamine-1-phosphate to form lipid A disaccharide, a precursor of lipid A, a phosphorylated glycolipid that anchors the lipopolysaccharide to the outer membrane of the cell. This Legionella pneumophila subsp. pneumophila (strain Philadelphia 1 / ATCC 33152 / DSM 7513) protein is Lipid-A-disaccharide synthase 2.